Reading from the N-terminus, the 34-residue chain is Turripeptide Pal9a (34 aa).

3 disulfides stabilise this stretch: C3–C17, C8–C19, and C13–C30. Glutamine amide is present on Q34.

In terms of tissue distribution, expressed by the venom duct.

The protein resides in the secreted. This chain is Turripeptide Pal9a, found in Polystira albida (White giant-turris).